Here is a 280-residue protein sequence, read N- to C-terminus: Diaminopimelate epimerase (280 aa).

Asn-13 and Asn-64 together coordinate substrate. Cys-73 (proton donor) is an active-site residue. Substrate-binding positions include 74–75, Asn-164, Asn-197, and 215–216; these read GN and ER. Cys-224 serves as the catalytic Proton acceptor. 225 to 226 provides a ligand contact to substrate; sequence GT.

The protein belongs to the diaminopimelate epimerase family. In terms of assembly, homodimer.

It is found in the cytoplasm. It carries out the reaction (2S,6S)-2,6-diaminopimelate = meso-2,6-diaminopimelate. The protein operates within amino-acid biosynthesis; L-lysine biosynthesis via DAP pathway; DL-2,6-diaminopimelate from LL-2,6-diaminopimelate: step 1/1. Catalyzes the stereoinversion of LL-2,6-diaminopimelate (L,L-DAP) to meso-diaminopimelate (meso-DAP), a precursor of L-lysine and an essential component of the bacterial peptidoglycan. This is Diaminopimelate epimerase from Leptospira biflexa serovar Patoc (strain Patoc 1 / Ames).